Here is a 1217-residue protein sequence, read N- to C-terminus: ATP-dependent helicase/nuclease subunit A (1217 aa).

Positions V10 to R475 constitute a UvrD-like helicase ATP-binding domain. ATP is bound at residue A31 to T38. The UvrD-like helicase C-terminal domain occupies K476 to G786.

It belongs to the helicase family. AddA subfamily. Heterodimer of AddA and AddB/RexB. Requires Mg(2+) as cofactor.

It catalyses the reaction Couples ATP hydrolysis with the unwinding of duplex DNA by translocating in the 3'-5' direction.. It carries out the reaction ATP + H2O = ADP + phosphate + H(+). The heterodimer acts as both an ATP-dependent DNA helicase and an ATP-dependent, dual-direction single-stranded exonuclease. Recognizes the chi site generating a DNA molecule suitable for the initiation of homologous recombination. The AddA nuclease domain is required for chi fragment generation; this subunit has the helicase and 3' -&gt; 5' nuclease activities. This is ATP-dependent helicase/nuclease subunit A from Staphylococcus aureus (strain Mu3 / ATCC 700698).